The primary structure comprises 440 residues: MAENSESNSKNVDVRPKTSRSRSADRKDGYVWSGKKLSWSKKSESCSDAETVSAIEKTEVPLRSQERKHSCSSIELDLDHSCGHRFLGRSLKQKLQDAVGQCFPIKNCSSRHSSGLPSKRKIHISELMLDKCPFPPRSDLAFRWHFIKRHTAPISPKSDEWVSTDLSQSELRDGQLKQRRNMEEVSCFSHTSVQPCVITSNNSSGRGGPGTDSIVNLASNNSIEDSDMDSDDEIITLCTSSRKRNKPKWEIDEEILQLETPPKYHTQIDYVHCLVPDLLQINNNPCYWGVMDKYAAEALLEGKPEGTFLLRDSAQEDYLFSVSFRRYSRSLHARIEQWNHNFSFDAHDPCVFHSPDITGLLEHYKDPSACMFFEPLLSTPLIRTFPFSLQHICRTVICNCTTYDGIDALPIPSSMKLYLKEYHYKSKVRVLRIDAPEQQC.

The segment covering Met1–Asn11 has biased composition (polar residues). The interval Met1–Gly29 is disordered. Residues Val12–Gly29 are compositionally biased toward basic and acidic residues. Residues Cys286–Leu381 enclose the SH2 domain. The SOCS box domain maps to Leu376 to Lys425.

Its pathway is protein modification; protein ubiquitination. SOCS family proteins form part of a classical negative feedback system that regulates cytokine signal transduction. Substrate-recognition component of a SCF-like ECS (Elongin BC-CUL2/5-SOCS-box protein) E3 ubiquitin-protein ligase complex which mediates the ubiquitination and subsequent proteasomal degradation of target proteins. Inhibits EGF signaling by mediating the degradation of the Tyr-phosphorylated EGF receptor/EGFR. This chain is Suppressor of cytokine signaling 4 (SOCS4), found in Bos taurus (Bovine).